The chain runs to 1366 residues: DNA-directed RNA polymerase subunit beta' (1366 aa).

Positions 1-40 are disordered; it reads MTSTSPKSRRSSGKGRKGSKKKGKQVSQIPPLSKTPPSFR. A compositionally biased stretch (basic residues) spans 7-24; it reads KSRRSSGKGRKGSKKKGK. Polar residues predominate over residues 25 to 38; the sequence is QVSQIPPLSKTPPS. Residues C250, C317, C324, and C327 each coordinate Zn(2+). Residues 1299–1366 form a disordered region; the sequence is TAAKSTSVLD…LQEEGLLADE (68 aa). Positions 1353 to 1366 are enriched in low complexity; it reads ALEGLQEEGLLADE.

The protein belongs to the RNA polymerase beta' chain family. RpoC2 subfamily. In terms of assembly, in cyanobacteria the RNAP catalytic core is composed of 2 alpha, 1 beta, 1 beta', 1 gamma and 1 omega subunit. When a sigma factor is associated with the core the holoenzyme is formed, which can initiate transcription. Zn(2+) is required as a cofactor.

The enzyme catalyses RNA(n) + a ribonucleoside 5'-triphosphate = RNA(n+1) + diphosphate. In terms of biological role, DNA-dependent RNA polymerase catalyzes the transcription of DNA into RNA using the four ribonucleoside triphosphates as substrates. In Prochlorococcus marinus (strain MIT 9211), this protein is DNA-directed RNA polymerase subunit beta'.